The primary structure comprises 739 residues: UPF0313 protein YgiQ (739 aa).

The Radical SAM core domain maps to 372-650 (AYEMIRFSVN…KALLRYHDPA (279 aa)). [4Fe-4S] cluster is bound by residues Cys-386, Cys-390, and Cys-393. The tract at residues 685–739 (REARRQNRNTRPALTKHTPMATQRQTPATAKKASSTQSRPVNAGAKKRPKAAVGR) is disordered. The segment covering 704-724 (MATQRQTPATAKKASSTQSRP) has biased composition (polar residues). A compositionally biased stretch (basic residues) spans 729–739 (AKKRPKAAVGR).

It belongs to the UPF0313 family. The cofactor is [4Fe-4S] cluster.

This chain is UPF0313 protein YgiQ, found in Shigella flexneri.